The following is a 363-amino-acid chain: MTSDIFFDPIWDVRMTDTSLRDGSHHKRHQFTKDEVGAIVAALDTAGVPVIEVTHGDGLGGSSFNYGFSKTPEQELIKLAAETAKEAKIAFLMLPGVGTKEDIKEAQNNGGSICRIATHCTEADVSIQHFGLARELGLETVGFLMMSHTIPPEKLAQQARIMADAGCQCVYVVDSAGALVLEGVRDRVAALVAELGDDAQVGFHGHENLGLGVANSVEAVRAGAKQIDGSCRRFGAGAGNAPVEALIGVFDKIGVKTGIDFFDIADAAEEVVAPAMPAECLLDRNALIMGYSGVYSSFLKHAIRQSERYGVPAHQLLHRAGQRKLIGGQEDQLIDIALEIKREMESDAAGRQSHAIGGSPRKG.

Residues 13–265 form the Pyruvate carboxyltransferase domain; it reads VRMTDTSLRD…KTGIDFFDIA (253 aa). Residue 21-22 participates in substrate binding; that stretch reads RD. D22 serves as a coordination point for Mn(2+). H25 (proton acceptor) is an active-site residue. Substrate-binding residues include S175 and H204. Positions 204 and 206 each coordinate Mn(2+). Substrate is bound at residue Y295.

It belongs to the 4-hydroxy-2-oxovalerate aldolase family.

The catalysed reaction is (S)-4-hydroxy-2-oxopentanoate = acetaldehyde + pyruvate. This Mycobacterium sp. (strain JLS) protein is 4-hydroxy-2-oxovalerate aldolase 1.